A 606-amino-acid chain; its full sequence is Putative helicase 172L (606 aa).

One can recognise a Helicase ATP-binding domain in the interval 59 to 264 (GEKTWGVRGG…WAQLRFCGYK (206 aa)). 72-79 (LCMGLGKT) contacts ATP. A Helicase C-terminal domain is found at 437 to 586 (YIKSSNFEIS…ASYLEGKERI (150 aa)).

The protein belongs to the SNF2/RAD54 helicase family.

This Invertebrate iridescent virus 6 (IIV-6) protein is Putative helicase 172L.